Reading from the N-terminus, the 346-residue chain is Sesquiterpene synthase Agr1 (346 aa).

Mg(2+) is bound by residues aspartate 98, asparagine 234, serine 238, and glutamate 242. A DDXXD motif motif is present at residues 98 to 102 (DNLSD). Positions 322 and 323 each coordinate (2E,6E)-farnesyl diphosphate.

The protein belongs to the terpene synthase family. It depends on Mg(2+) as a cofactor.

It catalyses the reaction (2E,6E)-farnesyl diphosphate = delta-cadinene + diphosphate. It carries out the reaction (2E,6E)-farnesyl diphosphate = alpha-muurolene + diphosphate. The enzyme catalyses (2E,6E)-farnesyl diphosphate = gamma-muurolene + diphosphate. The catalysed reaction is (2E,6E)-farnesyl diphosphate = alpha-selinene + diphosphate. Functionally, terpene cyclase that catalyzes the cyclization of farnesyl diphosphate (FPP) to various sesquiterpenes, including alpha-muurolene, gamma-muurolene, alpha-selinene, beta-selinene, delta-cadinene, alpha-cadinol and delta-cadinol. Delta-cadinene is the major product of Agr1. This chain is Sesquiterpene synthase Agr1, found in Cyclocybe aegerita (Black poplar mushroom).